We begin with the raw amino-acid sequence, 593 residues long: Salivary alpha-glucosidase (593 aa).

A signal peptide spans 1 to 19 (MPPLGVLLLLVALGHSTQG). Ca(2+) is bound by residues aspartate 49, aspartate 51, aspartate 53, isoleucine 55, aspartate 57, and asparagine 130. N-linked (GlcNAc...) asparagine glycosylation is found at asparagine 130 and asparagine 163. Ca(2+) contacts are provided by aspartate 201, tyrosine 235, leucine 236, and glutamate 238. Asparagine 295, asparagine 310, asparagine 338, asparagine 414, asparagine 445, and asparagine 453 each carry an N-linked (GlcNAc...) asparagine glycan. Asparagine 338 lines the N-acetyl-beta-D-glucosamine pocket.

This sequence belongs to the glycosyl hydrolase 13 family. In terms of tissue distribution, saliva (at protein level). Proximal lateral lobes of the salivary gland (at protein level).

Its subcellular location is the secreted. It carries out the reaction Hydrolysis of terminal, non-reducing (1-&gt;4)-linked alpha-D-glucose residues with release of alpha-D-glucose.. Functions as a glucosidase that shows high activity toward sucrose, a major component of nectar. Assists the mosquito in its sugar-feeding capabilities. This Anopheles gambiae (African malaria mosquito) protein is Salivary alpha-glucosidase.